The following is a 92-amino-acid chain: Acylphosphatase (92 aa).

The region spanning 5-92 (CIAAYVYGVV…TPFETFKIRY (88 aa)) is the Acylphosphatase-like domain. Residues Arg-20 and Asn-38 contribute to the active site.

It belongs to the acylphosphatase family.

It carries out the reaction an acyl phosphate + H2O = a carboxylate + phosphate + H(+). The protein is Acylphosphatase (acyP) of Yersinia enterocolitica serotype O:8 / biotype 1B (strain NCTC 13174 / 8081).